The primary structure comprises 190 residues: Peptidyl-prolyl cis-trans isomerase A (190 aa).

An N-terminal signal peptide occupies residues 1–24 (MLKSTLAAVAAVFALSALSPAALA). The 162-residue stretch at 27 to 188 (GDPHVLLTTS…KPVVILSAKV (162 aa)) folds into the PPIase cyclophilin-type domain.

It belongs to the cyclophilin-type PPIase family.

The protein resides in the periplasm. It carries out the reaction [protein]-peptidylproline (omega=180) = [protein]-peptidylproline (omega=0). PPIases accelerate the folding of proteins. It catalyzes the cis-trans isomerization of proline imidic peptide bonds in oligopeptides. This is Peptidyl-prolyl cis-trans isomerase A (ppiA) from Salmonella typhimurium (strain LT2 / SGSC1412 / ATCC 700720).